We begin with the raw amino-acid sequence, 92 residues long: MVENVVYPAYFDADRSRSEGRRVPMDLAIEEPTVDEIAKAVQQVGYDAVIEREKTYSREFKPRGAVVVRGTEDTAKNDLVQAIAAYLGVIRE.

Belongs to the SRP19 family. As to quaternary structure, part of the signal recognition particle protein translocation system, which is composed of SRP and FtsY. Archaeal SRP consists of a 7S RNA molecule of 300 nucleotides and two protein subunits: SRP54 and SRP19.

It localises to the cytoplasm. Involved in targeting and insertion of nascent membrane proteins into the cytoplasmic membrane. Binds directly to 7S RNA and mediates binding of the 54 kDa subunit of the SRP. This chain is Signal recognition particle 19 kDa protein, found in Halorubrum lacusprofundi (strain ATCC 49239 / DSM 5036 / JCM 8891 / ACAM 34).